Here is a 512-residue protein sequence, read N- to C-terminus: Centrosomal protein CCDC61 (512 aa).

At Met-1 the chain carries N-acetylmethionine. Residues 1-142 (MEQPAGLQVD…PLPLPYQGKP (142 aa)) form a head domain region. Coiled coils occupy residues 176 to 203 (WHLREQVTRLASEKRELEAQLGRSREEA) and 246 to 273 (RRLAKELEEVKASERNLRARLKTLNCEL). A Phosphothreonine modification is found at Thr-282. Disordered regions lie at residues 282 to 415 (TLPA…SFRS) and 430 to 472 (SQSV…HLAS). Basic and acidic residues predominate over residues 287–300 (AREDRALSSRERST). Ser-328, Ser-330, Ser-372, and Ser-375 each carry phosphoserine. Residues 406 to 415 (RSSSVDSFRS) show a composition bias toward low complexity. Phosphoserine is present on residues Ser-447 and Ser-473.

Belongs to the CCDC61 family. Forms homodimers (via head domain). Interacts with CEP170. Interacts with PCM1 and CEP131. Binds tubulin.

It localises to the cytoplasm. Its subcellular location is the cytoskeleton. The protein localises to the microtubule organizing center. The protein resides in the centrosome. It is found in the centriolar satellite. It localises to the cilium basal body. Microtubule-binding centrosomal protein required for centriole cohesion, independently of the centrosome-associated protein/CEP250 and rootletin/CROCC linker. In interphase, required for anchoring microtubule at the mother centriole subdistal appendages and for centrosome positioning. During mitosis, may be involved in spindle assembly and chromatin alignment by regulating the organization of spindle microtubules into a symmetrical structure. Plays a non-essential role in ciliogenesis. This is Centrosomal protein CCDC61 from Rattus norvegicus (Rat).